The following is a 279-amino-acid chain: Formamidopyrimidine-DNA glycosylase (279 aa).

P2 acts as the Schiff-base intermediate with DNA in catalysis. The active-site Proton donor is E3. Residue K58 is the Proton donor; for beta-elimination activity of the active site. The DNA site is built by H92, R111, and R153. The FPG-type zinc finger occupies 238–272 (TVYGKEGQSCLSCSSTIIKTKHSGRSTFYCKTCQY). R262 acts as the Proton donor; for delta-elimination activity in catalysis.

The protein belongs to the FPG family. Monomer. Zn(2+) is required as a cofactor.

The enzyme catalyses Hydrolysis of DNA containing ring-opened 7-methylguanine residues, releasing 2,6-diamino-4-hydroxy-5-(N-methyl)formamidopyrimidine.. It catalyses the reaction 2'-deoxyribonucleotide-(2'-deoxyribose 5'-phosphate)-2'-deoxyribonucleotide-DNA = a 3'-end 2'-deoxyribonucleotide-(2,3-dehydro-2,3-deoxyribose 5'-phosphate)-DNA + a 5'-end 5'-phospho-2'-deoxyribonucleoside-DNA + H(+). In terms of biological role, involved in base excision repair of DNA damaged by oxidation or by mutagenic agents. Acts as a DNA glycosylase that recognizes and removes damaged bases. Has a preference for oxidized purines, such as 7,8-dihydro-8-oxoguanine (8-oxoG). Has AP (apurinic/apyrimidinic) lyase activity and introduces nicks in the DNA strand. Cleaves the DNA backbone by beta-delta elimination to generate a single-strand break at the site of the removed base with both 3'- and 5'-phosphates. In Rickettsia massiliae (strain Mtu5), this protein is Formamidopyrimidine-DNA glycosylase.